Here is a 181-residue protein sequence, read N- to C-terminus: Adenine phosphoribosyltransferase (181 aa).

Belongs to the purine/pyrimidine phosphoribosyltransferase family. As to quaternary structure, homodimer.

It localises to the cytoplasm. It catalyses the reaction AMP + diphosphate = 5-phospho-alpha-D-ribose 1-diphosphate + adenine. Its pathway is purine metabolism; AMP biosynthesis via salvage pathway; AMP from adenine: step 1/1. Catalyzes a salvage reaction resulting in the formation of AMP, that is energically less costly than de novo synthesis. This Neorhizobium galegae (Rhizobium galegae) protein is Adenine phosphoribosyltransferase.